Here is a 292-residue protein sequence, read N- to C-terminus: 5,10-methylenetetrahydrofolate reductase (292 aa).

Catalysis depends on E26, which acts as the Proton donor/acceptor. Residue T57 coordinates NADH. Positions 58, 60, 86, 116, 117, 118, 130, 150, 154, 157, 163, 166, 169, and 170 each coordinate FAD. D118 serves as a coordination point for (6S)-5-methyl-5,6,7,8-tetrahydrofolate. Q181 is a binding site for NADH. The (6S)-5-methyl-5,6,7,8-tetrahydrofolate site is built by Q181, Q217, and R277.

The protein belongs to the methylenetetrahydrofolate reductase family. Requires FAD as cofactor.

It catalyses the reaction (6S)-5-methyl-5,6,7,8-tetrahydrofolate + NAD(+) = (6R)-5,10-methylene-5,6,7,8-tetrahydrofolate + NADH + H(+). Its pathway is one-carbon metabolism; tetrahydrofolate interconversion. It functions in the pathway amino-acid biosynthesis; L-methionine biosynthesis via de novo pathway. In terms of biological role, catalyzes the NADH-dependent reduction of 5,10-methylenetetrahydrofolate to 5-methyltetrahydrofolate. Is required to provide the methyl group necessary for methionine synthetase to convert homocysteine to methionine; the methyl group is given by 5-methyltetrahydrofolate. This Neisseria meningitidis serogroup B (strain ATCC BAA-335 / MC58) protein is 5,10-methylenetetrahydrofolate reductase (metF).